The chain runs to 122 residues: Basic phospholipase A2 10 (122 aa).

Cystine bridges form between C26–C114, C28–C43, C42–C94, C48–C122, C49–C87, C56–C80, and C74–C85. Positions 27, 29, and 31 each coordinate Ca(2+). Residue H46 is part of the active site. D47 provides a ligand contact to Ca(2+). D88 is a catalytic residue.

The cofactor is Ca(2+). Expressed by the venom gland.

The protein resides in the secreted. It carries out the reaction a 1,2-diacyl-sn-glycero-3-phosphocholine + H2O = a 1-acyl-sn-glycero-3-phosphocholine + a fatty acid + H(+). Inhibited by chemical modifications mediated by p-BPB, anhydrous acetic acid and NBSF. Its function is as follows. Snake venom phospholipase A2 (PLA2) that has a strong dose-dependent anticoagulant effect. In vivo, intramuscular and intervenal injection causes muscle necrosis. Induces moderate edema in the mouse foot pad. PLA2 catalyzes the calcium-dependent hydrolysis of the 2-acyl groups in 3-sn-phosphoglycerides. The sequence is that of Basic phospholipase A2 10 from Crotalus durissus cumanensis (South American rattlesnake).